Consider the following 126-residue polypeptide: Large ribosomal subunit protein bL17 (126 aa).

Belongs to the bacterial ribosomal protein bL17 family. Part of the 50S ribosomal subunit. Contacts protein L32.

The chain is Large ribosomal subunit protein bL17 from Xylella fastidiosa (strain 9a5c).